The chain runs to 94 residues: DNA-directed RNA polymerase subunit Rpo11 (94 aa).

This sequence belongs to the archaeal Rpo11/eukaryotic RPB11/RPC19 RNA polymerase subunit family. As to quaternary structure, part of the RNA polymerase complex.

Its subcellular location is the cytoplasm. It catalyses the reaction RNA(n) + a ribonucleoside 5'-triphosphate = RNA(n+1) + diphosphate. DNA-dependent RNA polymerase (RNAP) catalyzes the transcription of DNA into RNA using the four ribonucleoside triphosphates as substrates. This is DNA-directed RNA polymerase subunit Rpo11 from Natronomonas pharaonis (strain ATCC 35678 / DSM 2160 / CIP 103997 / JCM 8858 / NBRC 14720 / NCIMB 2260 / Gabara) (Halobacterium pharaonis).